Here is a 283-residue protein sequence, read N- to C-terminus: Probable voltage-dependent anion-selective channel (283 aa).

It belongs to the eukaryotic mitochondrial porin family.

The protein localises to the mitochondrion outer membrane. Functionally, forms a channel through the cell membrane that allows diffusion of small hydrophilic molecules. Plays a role in maintaining mitochondrial morphology. This chain is Probable voltage-dependent anion-selective channel, found in Caenorhabditis elegans.